A 397-amino-acid chain; its full sequence is Probable sugar efflux transporter (397 aa).

Helical transmembrane passes span 15–35 (VIVM…PVAL), 51–71 (GLMI…CMLM), 80–100 (LLIS…FAWN), 103–123 (VLLI…SITA), 137–157 (QALG…LPLG), 169–189 (TFTL…RLLP), 209–229 (PMLI…FTAY), 246–266 (KATA…VLFS), 277–297 (LLSS…VSGI), 299–319 (GAIF…SLAM), 333–353 (VATA…ALIG), and 365–385 (IGYV…LMFL).

The protein belongs to the major facilitator superfamily. SotB (TC 2.A.1.2) family.

It is found in the cell inner membrane. In terms of biological role, involved in the efflux of sugars. The physiological role may be the reduction of the intracellular concentration of toxic sugars or sugar metabolites. The protein is Probable sugar efflux transporter of Mannheimia succiniciproducens (strain KCTC 0769BP / MBEL55E).